Reading from the N-terminus, the 1375-residue chain is uncharacterized protein (1375 aa).

In terms of domain architecture, Helicase ATP-binding spans 277–476 (LLASGDIRGG…FGLLFLLRYS (200 aa)). Residue 290–297 (DEMGMGKT) coordinates ATP. The RING-type zinc-finger motif lies at 1092–1130 (CIICRDIIKQGFITTCGHLYCSFCLEAWLKHSSSCPMCK). A Helicase C-terminal domain is found at 1190–1336 (TISKHLLYLK…QLDKLGLDVP (147 aa)).

It belongs to the SNF2/RAD54 helicase family.

The protein localises to the nucleus. This is an uncharacterized protein from Schizosaccharomyces pombe (strain 972 / ATCC 24843) (Fission yeast).